Here is a 246-residue protein sequence, read N- to C-terminus: Bis(5'-nucleosyl)-tetraphosphatase PrpE [asymmetrical] (246 aa).

It belongs to the PrpE family. It depends on Ni(2+) as a cofactor.

It carries out the reaction P(1),P(4)-bis(5'-guanosyl) tetraphosphate + H2O = GMP + GTP + 2 H(+). Asymmetrically hydrolyzes Ap4p to yield AMP and ATP. The chain is Bis(5'-nucleosyl)-tetraphosphatase PrpE [asymmetrical] from Bacillus cereus (strain AH187).